The primary structure comprises 416 residues: Serine hydroxymethyltransferase (416 aa).

(6S)-5,6,7,8-tetrahydrofolate-binding positions include Leu117 and 121 to 123 (GHL). Position 226 is an N6-(pyridoxal phosphate)lysine (Lys226). A (6S)-5,6,7,8-tetrahydrofolate-binding site is contributed by Glu242.

Belongs to the SHMT family. Homodimer. Requires pyridoxal 5'-phosphate as cofactor.

The protein resides in the cytoplasm. It carries out the reaction (6R)-5,10-methylene-5,6,7,8-tetrahydrofolate + glycine + H2O = (6S)-5,6,7,8-tetrahydrofolate + L-serine. It participates in one-carbon metabolism; tetrahydrofolate interconversion. It functions in the pathway amino-acid biosynthesis; glycine biosynthesis; glycine from L-serine: step 1/1. Its function is as follows. Catalyzes the reversible interconversion of serine and glycine with tetrahydrofolate (THF) serving as the one-carbon carrier. This reaction serves as the major source of one-carbon groups required for the biosynthesis of purines, thymidylate, methionine, and other important biomolecules. Also exhibits THF-independent aldolase activity toward beta-hydroxyamino acids, producing glycine and aldehydes, via a retro-aldol mechanism. The polypeptide is Serine hydroxymethyltransferase (Endomicrobium trichonymphae).